The sequence spans 217 residues: Large ribosomal subunit protein uL3 (217 aa).

This sequence belongs to the universal ribosomal protein uL3 family. As to quaternary structure, part of the 50S ribosomal subunit. Forms a cluster with proteins L14 and L19.

One of the primary rRNA binding proteins, it binds directly near the 3'-end of the 23S rRNA, where it nucleates assembly of the 50S subunit. This is Large ribosomal subunit protein uL3 from Mycobacterium leprae (strain TN).